A 357-amino-acid chain; its full sequence is NADPH HC-toxin reductase 1 (357 aa).

Residues arginine 40, lysine 47, 68–69 (DL), 88–90 (VAT), tyrosine 178, lysine 182, 207–210 (LGLV), and threonine 222 each bind NADP(+). Catalysis depends on lysine 182, which acts as the Proton donor.

This sequence belongs to the NAD(P)-dependent epimerase/dehydratase family.

Activity is sensitive to heat, dependent on NADPH, and inhibited by p-hydroxymercuribenzoate and disulfiram. In tandem with Hm2, NADPH-dependent Helminthosporium carbonum (HC) toxin reductase (HCTR), which inactivates HC toxin, a cyclic tetrapeptide produced by the fungus Cochliobolus carbonum to permit infection and acting as an inhibitor of host histone deacetylases (HDACs), thus conferring resistance against C.carbonum race 1 in resistant cultivars (e.g. cv. B73 and cv. Wisconsin 22). Catalyzes the production of 8-hydroxy derivative of HC-toxin via the reduction of the 8-keto group of 2-amino-9,10-epoxy-8-oxo-decanoic acid, an amino acid of the HC-toxin. In Zea mays (Maize), this protein is NADPH HC-toxin reductase 1.